The following is a 62-amino-acid chain: Delta-theraphotoxin-Cg1a 3 (62 aa).

The signal sequence occupies residues 1 to 21; it reads MKTSILFVIFSLALVFALSPA. The propeptide occupies 22–29; the sequence is TEIEETDR. 3 cysteine pairs are disulfide-bonded: cysteine 31/cysteine 46, cysteine 38/cysteine 51, and cysteine 45/cysteine 58.

Belongs to the neurotoxin 10 (Hwtx-1) family. 33 (Jztx-1) subfamily. Expressed by the venom gland.

Its subcellular location is the secreted. Its function is as follows. Moderately inhibits voltage-gated sodium channels and weakly inhibits voltage-gated potassium channel. Inhibits the inactivation of rat Nav1.2/SCN2A (IC(50)=870 nM), rat Nav1.3/SCN3A (IC(50)=845 nM), rat Nav1.4/SCN4A (IC(50)=339 nM), human Nav1.5/SCN5A (IC(50)=335 nM) and human Nav1.7/SCN9A sodium channels (IC(50)=348 nM). The toxin delays the inactivation of sodium channels without affecting the activation and steady-state inactivation kinetics in the physiological range of voltages. Site-directed mutagenesis of the sodium channel indicates that the toxin interacts with site 3 located at the extracellular S3-S4 linker of domain IV. On potassium channels, it inhibits activation of channels with an IC(50) of 8.05 uM through a voltage sensor-trapping mechanism. It increases muscle contraction in several assays (mouse phrenic nerve-diaphragm, toad heart, rat vas deferens) and is suggested to act both presynaptically and postsynaptically. The sequence is that of Delta-theraphotoxin-Cg1a 3 from Chilobrachys guangxiensis (Chinese earth tiger tarantula).